We begin with the raw amino-acid sequence, 402 residues long: MHTSDPSNTATDHQQQTLELSIELMRRDSVTPHDKGCQEVLVERLSPLGFVHEFMYFGDEQASGRDAQVKNLWARRGNQDPVVCFAGHTDVVPTGNPDNWRIAPFDAKVHDGYLWGRGAADMKTGIAAFTVATERFVKNHPDHNGSIAMLITSDEEGPSINGTVKVIEVLEARNEKITYCLVGEPSSTDSLGDVIKNGRRGSLGGILTVTGKQGHVAYPHLAVNPIHALLPALAEFSVTEWDKGNDFFPATSMQISNINGGTGANNVIPETVEVVFNFRFSTETTEEELRAKTHEILDKHFANTEATYEIDWKLSGHPFLTAEGKLVDACKVAIKDITGTDTQLSTSGGTSDGRFIAPTGAQVVELGVRNATIHQVDERVEIDDIGKLAQIYERMLEELLLG.

Position 88 (His88) interacts with Zn(2+). The active site involves Asp90. Asp121 provides a ligand contact to Zn(2+). Glu155 (proton acceptor) is an active-site residue. Zn(2+)-binding residues include Glu156, Glu184, and His374.

This sequence belongs to the peptidase M20A family. DapE subfamily. In terms of assembly, homodimer. It depends on Zn(2+) as a cofactor. Co(2+) serves as cofactor.

It carries out the reaction N-succinyl-(2S,6S)-2,6-diaminopimelate + H2O = (2S,6S)-2,6-diaminopimelate + succinate. It functions in the pathway amino-acid biosynthesis; L-lysine biosynthesis via DAP pathway; LL-2,6-diaminopimelate from (S)-tetrahydrodipicolinate (succinylase route): step 3/3. Functionally, catalyzes the hydrolysis of N-succinyl-L,L-diaminopimelic acid (SDAP), forming succinate and LL-2,6-diaminopimelate (DAP), an intermediate involved in the bacterial biosynthesis of lysine and meso-diaminopimelic acid, an essential component of bacterial cell walls. This chain is Succinyl-diaminopimelate desuccinylase, found in Psychrobacter sp. (strain PRwf-1).